Here is a 412-residue protein sequence, read N- to C-terminus: Multifunctional CCA protein (412 aa).

2 residues coordinate ATP: Gly8 and Arg11. 2 residues coordinate CTP: Gly8 and Arg11. Positions 21 and 23 each coordinate Mg(2+). 3 residues coordinate ATP: Arg91, Arg137, and Arg140. 3 residues coordinate CTP: Arg91, Arg137, and Arg140. Residues 225-326 (TGIHVMMVID…ADMLQATDAY (102 aa)) form the HD domain.

This sequence belongs to the tRNA nucleotidyltransferase/poly(A) polymerase family. Bacterial CCA-adding enzyme type 1 subfamily. Monomer. Can also form homodimers and oligomers. Mg(2+) serves as cofactor. It depends on Ni(2+) as a cofactor.

It carries out the reaction a tRNA precursor + 2 CTP + ATP = a tRNA with a 3' CCA end + 3 diphosphate. The catalysed reaction is a tRNA with a 3' CCA end + 2 CTP + ATP = a tRNA with a 3' CCACCA end + 3 diphosphate. Its function is as follows. Catalyzes the addition and repair of the essential 3'-terminal CCA sequence in tRNAs without using a nucleic acid template. Adds these three nucleotides in the order of C, C, and A to the tRNA nucleotide-73, using CTP and ATP as substrates and producing inorganic pyrophosphate. tRNA 3'-terminal CCA addition is required both for tRNA processing and repair. Also involved in tRNA surveillance by mediating tandem CCA addition to generate a CCACCA at the 3' terminus of unstable tRNAs. While stable tRNAs receive only 3'-terminal CCA, unstable tRNAs are marked with CCACCA and rapidly degraded. The polypeptide is Multifunctional CCA protein (Nitrosomonas europaea (strain ATCC 19718 / CIP 103999 / KCTC 2705 / NBRC 14298)).